The chain runs to 660 residues: Potassium voltage-gated channel subfamily KQT member 1 (660 aa).

Residues 1–18 (MSSEVKSRWSGSGSQKSG) show a composition bias toward polar residues. The disordered stretch occupies residues 1 to 67 (MSSEVKSRWS…PESRAADSRA (67 aa)). At 1–113 (MSSEVKSRWS…YNFLERPTGW (113 aa)) the chain is on the cytoplasmic side. A compositionally biased stretch (basic and acidic residues) spans 53–67 (STDKNPESRAADSRA). Residues 114–135 (KCFIYHFTVFLIVLVCLIFSVM) traverse the membrane as a helical segment. Over 136–146 (STIEQYHYFAN) the chain is Extracellular. The helical transmembrane segment at 147–169 (RALVWMEIVLVVFFGTEYIVRLW) threads the bilayer. Residues 170–185 (SAGCRSKYVGFWGRLR) lie on the Cytoplasmic side of the membrane. Residues 186–211 (FARKPISIIDLIVVVASVIVLCVGSN) traverse the membrane as a helical segment. Residues 212-219 (GQVFATSA) lie on the Extracellular side of the membrane. Residues 220–235 (IRGIRFLQILRMLHVD) traverse the membrane as a helical; Voltage-sensor segment. Over 236 to 253 (RQGGTWRLLGSVVFIHRQ) the chain is Cytoplasmic. Gln-237 contacts a 1,2-diacyl-sn-glycero-3-phospho-(1D-myo-inositol-4,5-bisphosphate). Residues 254-276 (ELITTLYIGFLGLIFSSYFVYLA) form a helical membrane-spanning segment. Residues 277 to 292 (EKDAVDDSGSQQFGSY) are Extracellular-facing. The segment at residues 293 to 313 (ADALWWGVVTVTTIGYGDKVP) is an intramembrane region (pore-forming). At 314–315 (QT) the chain is on the extracellular side. The chain crosses the membrane as a helical span at residues 316–341 (WIGRTIASCFSVFAISFFALPAGILG). Residues 342–660 (SGFALKVQQK…RKDQDNQPDL (319 aa)) are Cytoplasmic-facing. Residues 399–426 (SPSPKTKKSVGKRKKLKTDKDNGLNSEK) form a disordered region. The segment covering 403-415 (KTKKSVGKRKKLK) has biased composition (basic residues). Positions 579–615 (KNTIGARLNRVEEKFVHMDQKLNTITDMLHHLVAHQQ) form a coiled coil.

Belongs to the potassium channel family. KQT (TC 1.A.1.15) subfamily. Kv7.1/KCNQ1 sub-subfamily. In terms of assembly, tetramer. Heterotetramer with KCNE1; targets to the membrane raft. Interacts (via C-terminus) with CALM; forms a heterotetramer in a calcium-independent manner. Interacts with KCNE2; form a heterooligomer complex that targets to the membrane raft and leading to currents with an apparently instantaneous activation, a rapid deactivation process and a linear current-voltage relationship and decreases the amplitude of the outward current. Interacts with KCNE3; four KCNE3 molecules are bound to one KCNQ1 tetramer (4:4 KCNQ1:KCNE3 stoichiometry); alters membrane raft localization; affects KCNQ1 structure and gating properties. Interacts with KCNE4; impairs KCNQ1 localization in lipid rafts and inhibits voltage-gated potassium channel activity. Interacts with KCNE5; impairs KCNQ1 localization in lipid rafts and only conducts current upon strong and continued depolarization. As to expression, expressed only in rectal gland and heart. Faintly expressed in intestine. Undetectable in kidney, brain, testis, liver and gills.

Its subcellular location is the cell membrane. The protein localises to the cytoplasmic vesicle membrane. The protein resides in the membrane raft. It is found in the endoplasmic reticulum. It localises to the basolateral cell membrane. It carries out the reaction K(+)(in) = K(+)(out). Its activity is regulated as follows. PIP2 molecule is essential to activate KCNQ channels by inducing the coupling of the voltage-sensing domain (VSD) and the pore-forming domain (PD). Upon channel activation, PIP2 disrupts the VSD-calmodulin/CALM interactions, causing the release of CALM from the VSD which triggers the opening of the gate. Calcium potentiates KCNQ1 channel current through calcium-bound CALM. Calcium-bound CALM competes with PIP2 to stabilize the channel open state. Its function is as follows. Pore-forming subunit of the voltage-gated potassium (Kv) channel involved in the regulation of cardiomyocyte excitability and important in normal development and functions of myocardium, inner ear, stomach and colon. Associates with KCNE beta subunits that modulates current kinetics. Induces a voltage-dependent by rapidly activating and slowly deactivating potassium-selective outward current. Also promotes a delayed voltage activated potassium current showing outward rectification characteristic. During beta-adrenergic receptor stimulation participates in cardiac repolarization by associating with KCNE1 to form the I(Ks) cardiac potassium current that increases the amplitude and slows down the activation kinetics of outward potassium current I(Ks). When associated with KCNE3, forms the potassium channel that is important for cyclic AMP-stimulated intestinal secretion of chloride ions. When associated with KCNE2, forms a heterooligomer complex leading to currents with an apparently instantaneous activation, a rapid deactivation process and a linear current-voltage relationship and decreases the amplitude of the outward current. When associated with KCNE4, inhibits voltage-gated potassium channel activity. When associated with KCNE5, this complex only conducts current upon strong and continued depolarization. The sequence is that of Potassium voltage-gated channel subfamily KQT member 1 from Squalus acanthias (Spiny dogfish).